An 821-amino-acid polypeptide reads, in one-letter code: Centrosomal protein of 95 kDa (821 aa).

Disordered regions lie at residues 310–354, 390–474, and 514–550; these read TLCK…FPQK, ATGE…DTHH, and KEAFAKGTTKQSQVQKIYSRKTAAPTPKGGLLKSSKA. Composition is skewed to basic and acidic residues over residues 325 to 340 and 390 to 410; these read ESSKTRRLSKGERSEN and ATGEAHGKDGGAGDEEAHSAN. The segment covering 427-441 has biased composition (basic residues); that stretch reads RKPRPGFSMHRKAPY. Phosphoserine is present on residues S445, S447, and S449. 2 coiled-coil regions span residues 578-627 and 695-789; these read LTKM…VKKE and LQIQ…DDDA.

It is found in the cytoplasm. It localises to the cytoskeleton. Its subcellular location is the microtubule organizing center. The protein resides in the centrosome. The protein localises to the spindle pole. The protein is Centrosomal protein of 95 kDa (Cep95) of Rattus norvegicus (Rat).